Here is a 70-residue protein sequence, read N- to C-terminus: DNA-directed RNA polymerase subunit omega (70 aa).

It belongs to the RNA polymerase subunit omega family. The RNAP catalytic core consists of 2 alpha, 1 beta, 1 beta' and 1 omega subunit. When a sigma factor is associated with the core the holoenzyme is formed, which can initiate transcription.

It carries out the reaction RNA(n) + a ribonucleoside 5'-triphosphate = RNA(n+1) + diphosphate. Its function is as follows. Promotes RNA polymerase assembly. Latches the N- and C-terminal regions of the beta' subunit thereby facilitating its interaction with the beta and alpha subunits. This Staphylococcus haemolyticus (strain JCSC1435) protein is DNA-directed RNA polymerase subunit omega.